Here is a 426-residue protein sequence, read N- to C-terminus: Tyrosine--tRNA ligase (426 aa).

Y38 lines the L-tyrosine pocket. The short motif at 43 to 52 (PTADSLHIGS) is the 'HIGH' region element. The L-tyrosine site is built by Y176 and Q180. The short motif at 236–240 (KFGKT) is the 'KMSKS' region element. K239 serves as a coordination point for ATP. One can recognise an S4 RNA-binding domain in the interval 359–426 (QTIVEVLTQS…KKLFNLYIWK (68 aa)).

This sequence belongs to the class-I aminoacyl-tRNA synthetase family. TyrS type 1 subfamily. In terms of assembly, homodimer.

It is found in the cytoplasm. The catalysed reaction is tRNA(Tyr) + L-tyrosine + ATP = L-tyrosyl-tRNA(Tyr) + AMP + diphosphate + H(+). Catalyzes the attachment of tyrosine to tRNA(Tyr) in a two-step reaction: tyrosine is first activated by ATP to form Tyr-AMP and then transferred to the acceptor end of tRNA(Tyr). In Aliivibrio salmonicida (strain LFI1238) (Vibrio salmonicida (strain LFI1238)), this protein is Tyrosine--tRNA ligase.